Reading from the N-terminus, the 283-residue chain is GTPase Era (283 aa).

The 169-residue stretch at Tyr7–Glu175 folds into the Era-type G domain. A G1 region spans residues Gly15–Ser22. Gly15–Ser22 is a binding site for GTP. Positions Asn41–Ser45 are G2. A G3 region spans residues Asp62 to Gly65. GTP is bound by residues Asp62–Val66 and Asn124–Asp127. The segment at Asn124–Asp127 is G4. Residues Ile154–Ala156 are G5. The KH type-2 domain maps to Ile198–Asn283.

The protein belongs to the TRAFAC class TrmE-Era-EngA-EngB-Septin-like GTPase superfamily. Era GTPase family. Monomer.

Its subcellular location is the cytoplasm. It localises to the cell membrane. Its function is as follows. An essential GTPase that binds both GDP and GTP, with rapid nucleotide exchange. Plays a role in 16S rRNA processing and 30S ribosomal subunit biogenesis and possibly also in cell cycle regulation and energy metabolism. This is GTPase Era from Buchnera aphidicola subsp. Acyrthosiphon pisum (strain Tuc7).